The following is a 166-amino-acid chain: Spiderine-1b (166 aa).

Positions 1–18 (MKFALVLLGICAFYLVNA) are cleaved as a signal peptide. The propeptide at 19-58 (TGDLETELEASELQELQEALDLIGETSLESLEAEELEEAR) is removed in mature form. Positions 59–99 (KFKWGKLFSAAKKLYKKGKKLSKNKNFKKALKFGKQLAKNL) are linear cationic cytotoxin domain. Residues 113–166 (NNKCWAIGTTCSDDCDCCPEHHCHCPAGKWLPGLFRCTCQVTESDKVNKCPPAE) enclose the Oxytoxin-type inhibitor cystine knot (ICK) domain. 5 cysteine pairs are disulfide-bonded: Cys-116-Cys-130, Cys-123-Cys-135, Cys-127-Cys-162, Cys-129-Cys-151, and Cys-137-Cys-149.

Belongs to the spiderine family. Cationic/spiderine subfamily. As to expression, expressed by the venom gland.

It is found in the secreted. In terms of biological role, has antimicrobial, insecticidal, cytolytic and cytotoxic activity. In Oxyopes takobius (Lynx spider), this protein is Spiderine-1b.